Consider the following 427-residue polypeptide: Flotillin-1 (427 aa).

A phosphoserine mark is found at serine 19, serine 163, and serine 385.

It belongs to the band 7/mec-2 family. Flotillin subfamily. As to quaternary structure, heterooligomeric complex of flotillin-1 and flotillin-2 and caveolin-1 and caveolin-2. Interacts with ECPAS.

Its subcellular location is the cell membrane. The protein resides in the endosome. The protein localises to the membrane. It localises to the caveola. It is found in the melanosome. Its subcellular location is the membrane raft. Functionally, may act as a scaffolding protein within caveolar membranes, functionally participating in formation of caveolae or caveolae-like vesicles. The sequence is that of Flotillin-1 (FLOT1) from Bos taurus (Bovine).